A 123-amino-acid chain; its full sequence is Small ribosomal subunit protein uS12cz/uS12cy (123 aa).

The protein belongs to the universal ribosomal protein uS12 family. In terms of assembly, part of the 30S ribosomal subunit.

It localises to the plastid. Its subcellular location is the chloroplast. Its function is as follows. With S4 and S5 plays an important role in translational accuracy. Located at the interface of the 30S and 50S subunits. In Citrus sinensis (Sweet orange), this protein is Small ribosomal subunit protein uS12cz/uS12cy (rps12-A).